Here is a 108-residue protein sequence, read N- to C-terminus: Tetrahydromethanopterin S-methyltransferase subunit B (108 aa).

Residues 81–101 (FFGFWISLSILTLGLILVIGL) traverse the membrane as a helical segment.

It belongs to the MtrB family. In terms of assembly, the complex is composed of 8 subunits; MtrA, MtrB, MtrC, MtrD, MtrE, MtrF, MtrG and MtrH.

It is found in the cell membrane. The enzyme catalyses 5-methyl-5,6,7,8-tetrahydromethanopterin + coenzyme M + 2 Na(+)(in) = 5,6,7,8-tetrahydromethanopterin + methyl-coenzyme M + 2 Na(+)(out). The protein operates within one-carbon metabolism; methanogenesis from CO(2); methyl-coenzyme M from 5,10-methylene-5,6,7,8-tetrahydromethanopterin: step 2/2. Functionally, part of a complex that catalyzes the formation of methyl-coenzyme M and tetrahydromethanopterin from coenzyme M and methyl-tetrahydromethanopterin. This is an energy-conserving, sodium-ion translocating step. This chain is Tetrahydromethanopterin S-methyltransferase subunit B, found in Methanococcus aeolicus (strain ATCC BAA-1280 / DSM 17508 / OCM 812 / Nankai-3).